Here is a 460-residue protein sequence, read N- to C-terminus: ATP synthase subunit beta (460 aa).

Residue 150–157 coordinates ATP; sequence GGAGVGKT.

This sequence belongs to the ATPase alpha/beta chains family. As to quaternary structure, F-type ATPases have 2 components, CF(1) - the catalytic core - and CF(0) - the membrane proton channel. CF(1) has five subunits: alpha(3), beta(3), gamma(1), delta(1), epsilon(1). CF(0) has three main subunits: a(1), b(2) and c(9-12). The alpha and beta chains form an alternating ring which encloses part of the gamma chain. CF(1) is attached to CF(0) by a central stalk formed by the gamma and epsilon chains, while a peripheral stalk is formed by the delta and b chains.

The protein resides in the cell inner membrane. The enzyme catalyses ATP + H2O + 4 H(+)(in) = ADP + phosphate + 5 H(+)(out). Its function is as follows. Produces ATP from ADP in the presence of a proton gradient across the membrane. The catalytic sites are hosted primarily by the beta subunits. This is ATP synthase subunit beta from Pectobacterium atrosepticum (strain SCRI 1043 / ATCC BAA-672) (Erwinia carotovora subsp. atroseptica).